The primary structure comprises 164 residues: Replication restart protein DnaT (164 aa).

It belongs to the DnaT family. Homooligomerizes. Interacts with PriB. Component of the replication restart primosome. Primosome assembly occurs via a 'hand-off' mechanism. PriA binds to replication forks, subsequently PriB then DnaT bind; DnaT then displaces ssDNA to generate the helicase loading substrate.

Its function is as follows. Involved in the restart of stalled replication forks, which reloads the replicative helicase on sites other than the origin of replication. Can function in multiple replication restart pathways. Displaces ssDNA from a PriB-ssDNA complex. Probably forms a spiral filament on ssDNA. This Buchnera aphidicola subsp. Acyrthosiphon pisum (strain 5A) protein is Replication restart protein DnaT.